We begin with the raw amino-acid sequence, 576 residues long: MAWISLEKAKKLEERFGYPKVSEGKGVLSVEVPKDKFIEFLTFLKEDPEYQFKMFIDLTIIDHGEKENPRFQGVVILFSPKNQERIIVKTWAENETLPTLTNLWKGAKWAEREAWDMFGIKFEGHENLVRMLLWETYPYHPLRKDFPLEGIKDTELPSLNETLRGENLEGLFNYDRMHTALPTMEDLEITQKKRMPVKTSQIVLNWGPLHPGTHGTIWFLFDLDGEYVKQCDIIIGQLHRGVEKLGENVNWQQFIPYTDRMDYIAAINENHAYVLAAEKMLGIEVPEKAKWIRTMMAELSRINSHLLWLGTYALDLGALTMFLYTFREREKIMDIIEGITGARFTINYFRIGGVFADLPYGALDAIEHLIKDLPQRINDYETLLTRNRVWLSRNKDVCVITEEDVYQYGLTGAVARGSGVPYDVRKIDKYDAYGEVEFDIPVGEKGDSYDRYLVRMEEMRQSIRIIEQCIAKLRKMSKDDPYFFQTPDEKKLKVTIDGRGMKLPAGETYASSDNPRGELGFYIYNKKDGLKAHRMRIRSGAFYNLQVFTKAIIGRPIADAITLLSTIDPVVGETDR.

Residues 1–176 (MAWISLEKAK…NLEGLFNYDR (176 aa)) form an NADH dehydrogenase I subunit C region. Residues 200–576 (SQIVLNWGPL…IDPVVGETDR (377 aa)) form an NADH dehydrogenase I subunit D region.

The protein in the N-terminal section; belongs to the complex I 30 kDa subunit family. In the C-terminal section; belongs to the complex I 49 kDa subunit family. In terms of assembly, NDH-1 is composed of 13 different subunits. Subunits NuoB, CD, E, F, and G constitute the peripheral sector of the complex.

It is found in the cell inner membrane. The enzyme catalyses a quinone + NADH + 5 H(+)(in) = a quinol + NAD(+) + 4 H(+)(out). Functionally, NDH-1 shuttles electrons from NADH, via FMN and iron-sulfur (Fe-S) centers, to quinones in the respiratory chain. The immediate electron acceptor for the enzyme in this species is believed to be ubiquinone. Couples the redox reaction to proton translocation (for every two electrons transferred, four hydrogen ions are translocated across the cytoplasmic membrane), and thus conserves the redox energy in a proton gradient. The chain is NADH-quinone oxidoreductase subunit C/D from Sulfurihydrogenibium sp. (strain YO3AOP1).